The sequence spans 161 residues: MSCSIILPNLINFINNDNNNIFEKNNEIQKQQQEEENKSNQVNNILNSIIESKFTSLNPKLKIQETPNQYQIKALIPLNFNKEEISVNVKNNRLIISAFKEIKFENQEKTKLTKFEKYQKTINVSNKNLDFSSIKAQFKDNTLTITIFKQSFEKEIKINIE.

The sHSP domain occupies 52-161 (SKFTSLNPKL…FEKEIKINIE (110 aa)).

This sequence belongs to the small heat shock protein (HSP20) family.

The chain is Small heat shock protein hspJ (hspJ) from Dictyostelium discoideum (Social amoeba).